Reading from the N-terminus, the 361-residue chain is 5-formaminoimidazole-4-carboxamide-1-(beta)-D-ribofuranosyl 5'-monophosphate synthetase (361 aa).

His-27 and Ser-94 together coordinate 5-amino-1-(5-phospho-beta-D-ribosyl)imidazole-4-carboxamide. The ATP-grasp domain maps to Arg-116–Lys-348. ATP-binding positions include Pro-146–Cys-208 and Glu-230. Residue Asn-258 coordinates 5-amino-1-(5-phospho-beta-D-ribosyl)imidazole-4-carboxamide. Residues Gln-297 and Glu-310 each contribute to the Mg(2+) site.

The protein belongs to the phosphohexose mutase family. Mg(2+) is required as a cofactor. The cofactor is Mn(2+).

The enzyme catalyses 5-amino-1-(5-phospho-beta-D-ribosyl)imidazole-4-carboxamide + formate + ATP = 5-formamido-1-(5-phospho-D-ribosyl)imidazole-4-carboxamide + ADP + phosphate. The protein operates within purine metabolism; IMP biosynthesis via de novo pathway; 5-formamido-1-(5-phospho-D-ribosyl)imidazole-4-carboxamide from 5-amino-1-(5-phospho-D-ribosyl)imidazole-4-carboxamide (formate route): step 1/1. Catalyzes the ATP- and formate-dependent formylation of 5-aminoimidazole-4-carboxamide-1-beta-d-ribofuranosyl 5'-monophosphate (AICAR) to 5-formaminoimidazole-4-carboxamide-1-beta-d-ribofuranosyl 5'-monophosphate (FAICAR) in the absence of folates. The sequence is that of 5-formaminoimidazole-4-carboxamide-1-(beta)-D-ribofuranosyl 5'-monophosphate synthetase from Methanococcus maripaludis (strain C7 / ATCC BAA-1331).